The chain runs to 412 residues: Subtilisin-like protease 6 (412 aa).

The N-terminal stretch at 1–20 (MGFITKAIPIVLAALSTVNG) is a signal peptide. Positions 21 to 127 (AKILEAGPHA…VRTSTNGTNL (107 aa)) are excised as a propeptide. The 85-residue stretch at 36 to 120 (KYIVVMKREV…YIEPDFVVRT (85 aa)) folds into the Inhibitor I9 domain. N-linked (GlcNAc...) asparagine glycans are attached at residues asparagine 123 and asparagine 126. A Peptidase S8 domain is found at 135–412 (SWGLARVSSK…SKLIYNGSGK (278 aa)). Residues aspartate 167 and histidine 198 each act as charge relay system in the active site. 2 N-linked (GlcNAc...) asparagine glycosylation sites follow: asparagine 252 and asparagine 264. Catalysis depends on serine 358, which acts as the Charge relay system. Asparagine 408 carries an N-linked (GlcNAc...) asparagine glycan.

It belongs to the peptidase S8 family.

It localises to the secreted. Secreted subtilisin-like serine protease with keratinolytic activity that contributes to pathogenicity. The protein is Subtilisin-like protease 6 (SUB6) of Trichophyton tonsurans (Scalp ringworm fungus).